Reading from the N-terminus, the 865-residue chain is DNA topoisomerase 1 (865 aa).

In terms of domain architecture, Toprim spans 3–142 (KALVIVESPA…RYSRVVFNEI (140 aa)). Glu9 provides a ligand contact to Mg(2+). The interval 37–65 (LPTSGSAAKKSADSTSTKTAKKPKKDERG) is disordered. The span at 39–54 (TSGSAAKKSADSTSTK) shows a compositional bias: low complexity. Asp111 serves as a coordination point for Mg(2+). Residues 158–575 (NINRVNAQQA…NFFSDFTQQL (418 aa)) enclose the Topo IA-type catalytic domain. Residues 192–197 (SAGRVQ) form an interaction with DNA region. The O-(5'-phospho-DNA)-tyrosine intermediate role is filled by Tyr319. C4-type zinc fingers lie at residues 599–630 (CPTCGRKMGIRTASTGVFLGCSGYALSPKERC), 662–689 (CQKCGTAMDSYLIDPKRKLHVCGNNPTC), and 711–736 (CEKCGSEMHLKMGRFGKYMACTNDEC).

Belongs to the type IA topoisomerase family. Monomer. It depends on Mg(2+) as a cofactor.

The enzyme catalyses ATP-independent breakage of single-stranded DNA, followed by passage and rejoining.. Releases the supercoiling and torsional tension of DNA, which is introduced during the DNA replication and transcription, by transiently cleaving and rejoining one strand of the DNA duplex. Introduces a single-strand break via transesterification at a target site in duplex DNA. The scissile phosphodiester is attacked by the catalytic tyrosine of the enzyme, resulting in the formation of a DNA-(5'-phosphotyrosyl)-enzyme intermediate and the expulsion of a 3'-OH DNA strand. The free DNA strand then undergoes passage around the unbroken strand, thus removing DNA supercoils. Finally, in the religation step, the DNA 3'-OH attacks the covalent intermediate to expel the active-site tyrosine and restore the DNA phosphodiester backbone. In Salmonella typhimurium (strain LT2 / SGSC1412 / ATCC 700720), this protein is DNA topoisomerase 1.